The primary structure comprises 355 residues: Methylthioribose-1-phosphate isomerase (355 aa).

Substrate-binding positions include 47-49 (RGA), Arg-91, and Gln-199. Catalysis depends on Asp-240, which acts as the Proton donor. 250-251 (NK) lines the substrate pocket.

The protein belongs to the eIF-2B alpha/beta/delta subunits family. MtnA subfamily.

It catalyses the reaction 5-(methylsulfanyl)-alpha-D-ribose 1-phosphate = 5-(methylsulfanyl)-D-ribulose 1-phosphate. It functions in the pathway amino-acid biosynthesis; L-methionine biosynthesis via salvage pathway; L-methionine from S-methyl-5-thio-alpha-D-ribose 1-phosphate: step 1/6. In terms of biological role, catalyzes the interconversion of methylthioribose-1-phosphate (MTR-1-P) into methylthioribulose-1-phosphate (MTRu-1-P). In Oleidesulfovibrio alaskensis (strain ATCC BAA-1058 / DSM 17464 / G20) (Desulfovibrio alaskensis), this protein is Methylthioribose-1-phosphate isomerase.